Here is a 480-residue protein sequence, read N- to C-terminus: Ribosomal protein uS12 methylthiotransferase RimO (480 aa).

The MTTase N-terminal domain occupies 14-135; sequence LSVAMVTLGC…IAARLRSIVA (122 aa). 6 residues coordinate [4Fe-4S] cluster: Cys-23, Cys-59, Cys-98, Cys-193, Cys-197, and Cys-200. Residues 179–410 form the Radical SAM core domain; the sequence is LDDGPTAALK…DLVEELTSQR (232 aa). Residues 412–480 form the TRAM domain; it reads AERLGEQVEV…EGADLDARPL (69 aa).

It belongs to the methylthiotransferase family. RimO subfamily. The cofactor is [4Fe-4S] cluster.

The protein resides in the cytoplasm. The enzyme catalyses L-aspartate(89)-[ribosomal protein uS12]-hydrogen + (sulfur carrier)-SH + AH2 + 2 S-adenosyl-L-methionine = 3-methylsulfanyl-L-aspartate(89)-[ribosomal protein uS12]-hydrogen + (sulfur carrier)-H + 5'-deoxyadenosine + L-methionine + A + S-adenosyl-L-homocysteine + 2 H(+). Catalyzes the methylthiolation of an aspartic acid residue of ribosomal protein uS12. The chain is Ribosomal protein uS12 methylthiotransferase RimO from Nocardioides sp. (strain ATCC BAA-499 / JS614).